The sequence spans 186 residues: ATP synthase subunit delta (186 aa).

Belongs to the ATPase delta chain family. F-type ATPases have 2 components, F(1) - the catalytic core - and F(0) - the membrane proton channel. F(1) has five subunits: alpha(3), beta(3), gamma(1), delta(1), epsilon(1). F(0) has three main subunits: a(1), b(2) and c(10-14). The alpha and beta chains form an alternating ring which encloses part of the gamma chain. F(1) is attached to F(0) by a central stalk formed by the gamma and epsilon chains, while a peripheral stalk is formed by the delta and b chains.

The protein resides in the cell inner membrane. Functionally, f(1)F(0) ATP synthase produces ATP from ADP in the presence of a proton or sodium gradient. F-type ATPases consist of two structural domains, F(1) containing the extramembraneous catalytic core and F(0) containing the membrane proton channel, linked together by a central stalk and a peripheral stalk. During catalysis, ATP synthesis in the catalytic domain of F(1) is coupled via a rotary mechanism of the central stalk subunits to proton translocation. Its function is as follows. This protein is part of the stalk that links CF(0) to CF(1). It either transmits conformational changes from CF(0) to CF(1) or is implicated in proton conduction. This Mesorhizobium japonicum (strain LMG 29417 / CECT 9101 / MAFF 303099) (Mesorhizobium loti (strain MAFF 303099)) protein is ATP synthase subunit delta.